A 379-amino-acid polypeptide reads, in one-letter code: ORC1-type DNA replication protein 2 (379 aa).

ATP-binding positions include 69-73 (TGKTT), tyrosine 211, and arginine 223.

This sequence belongs to the CDC6/cdc18 family. Interacts with MCM. Post-translationally, autophosphorylated on a serine. Phosphorylation is inhibited by binding to MCM. Both single-stranded DNA and double-stranded DNA inhibit the phosphorylation reaction.

Functionally, involved in regulation of DNA replication. Dissociates the MCM complex and inhibits the MCM helicase activity, suggesting that it may function as a helicase loader. Binds to both specific and random double-stranded or single-stranded DNA. This chain is ORC1-type DNA replication protein 2 (cdc6-2), found in Methanothermobacter thermautotrophicus (strain ATCC 29096 / DSM 1053 / JCM 10044 / NBRC 100330 / Delta H) (Methanobacterium thermoautotrophicum).